The following is a 465-amino-acid chain: Deoxyguanosinetriphosphate triphosphohydrolase-like protein (465 aa).

The tract at residues 1-22 (MKWDKLLNDKRRRESGVTRSKN) is disordered. Positions 63–252 (RLTHSMEVST…LEVADDIAYL (190 aa)) constitute an HD domain.

Belongs to the dGTPase family. Type 3 subfamily.

This chain is Deoxyguanosinetriphosphate triphosphohydrolase-like protein, found in Listeria innocua serovar 6a (strain ATCC BAA-680 / CLIP 11262).